Reading from the N-terminus, the 280-residue chain is Dexamethasone-induced Ras-related protein 1 (280 aa).

An S-nitrosocysteine modification is found at cysteine 11. Residue 31–38 coordinates GTP; that stretch reads GSSKVGKT. Residues 53-61 carry the Effector region motif; sequence YTPTIEDFH. GTP-binding positions include 78-82 and 145-148; these read DTSGN and NKGD. Position 277 is a cysteine methyl ester (cysteine 277). Cysteine 277 carries S-farnesyl cysteine lipidation. Residues 278 to 280 constitute a propeptide, removed in mature form; sequence VIS.

The protein belongs to the small GTPase superfamily. RasD family. Forms a ternary complex with CAPON and NOS1. Component of a complex, at least composed of APBB1, RASD1/DEXRAS1 and APP. Interacts with APBB1/FE65. Forms. S-nitrosylation stimulates guanine-nucleotide exchange activity. Prominently found in brain at both mRNA and protein levels. Moderate expression in testis and lung. Slightly expressed in heart, spleen, skeletal muscle, liver and kidney.

The protein resides in the cell membrane. It is found in the cytoplasm. It localises to the perinuclear region. Its subcellular location is the nucleus. Its function is as follows. Small GTPase. Negatively regulates the transcription regulation activity of the APBB1/FE65-APP complex via its interaction with APBB1/FE65. The protein is Dexamethasone-induced Ras-related protein 1 (Rasd1) of Rattus norvegicus (Rat).